The chain runs to 600 residues: Aspartate--tRNA(Asp/Asn) ligase (600 aa).

Glu-174 is an L-aspartate binding site. The tract at residues 198-201 is aspartate; that stretch reads QLFK. Residue Arg-220 coordinates L-aspartate. ATP-binding positions include 220–222 and Gln-229; that span reads RDE. Residue His-457 participates in L-aspartate binding. Residue Glu-491 participates in ATP binding. Arg-498 provides a ligand contact to L-aspartate. 543–546 serves as a coordination point for ATP; it reads GLDR.

This sequence belongs to the class-II aminoacyl-tRNA synthetase family. Type 1 subfamily. Homodimer.

It is found in the cytoplasm. The catalysed reaction is tRNA(Asx) + L-aspartate + ATP = L-aspartyl-tRNA(Asx) + AMP + diphosphate. Functionally, aspartyl-tRNA synthetase with relaxed tRNA specificity since it is able to aspartylate not only its cognate tRNA(Asp) but also tRNA(Asn). Reaction proceeds in two steps: L-aspartate is first activated by ATP to form Asp-AMP and then transferred to the acceptor end of tRNA(Asp/Asn). The sequence is that of Aspartate--tRNA(Asp/Asn) ligase from Burkholderia vietnamiensis (strain G4 / LMG 22486) (Burkholderia cepacia (strain R1808)).